A 262-amino-acid chain; its full sequence is MQFLALALTILLAAATQAVPMQADAPSQLEHVKVAMMEYMAQVKETAQRSIDHLDDTEYKEYKVQLSQSLDNLQQYAQTASESLAPYSEAIGVQLTEATAAVRAEVMKDVEELRSQLEPKRAELKEVLDKHIDEYRKRLEPLIKDIVEQRRTELEAFRVKIEPVVEEMRAKVSANVEETKAKLMPIVETVRAKLTERLEELRTLASPYAEEYKEQMVKAVGEVREKVVPLTTDFKGQLGPAAEQAKEKLMALYETISQAMKA.

The signal sequence occupies residues 1–18 (MQFLALALTILLAAATQA). Residues 32–63 (VKVAMMEYMAQVKETAQRSIDHLDDTEYKEYK) are 3 X approximate tandem repeats. 2 consecutive repeat copies span residues 64 to 85 (VQLS…ESLA) and 87 to 107 (YSEA…AEVM). Residues 64-262 (VQLSQSLDNL…YETISQAMKA (199 aa)) are 10 X approximate tandem repeats. A 3; half-length repeat occupies 108–118 (KDVEELRSQLE). 5 consecutive repeat copies span residues 119-140 (PKRA…KRLE), 141-162 (PLIK…VKIE), 163-184 (PVVE…AKLM), 185-206 (PIVE…TLAS), and 207-228 (PYAE…EKVV). The 9; half-length repeat unit spans residues 229–239 (PLTTDFKGQLG). Residues 240-262 (PAAEQAKEKLMALYETISQAMKA) form repeat 10.

Belongs to the apolipoprotein A1/A4/E family.

The protein localises to the secreted. Its function is as follows. Participates in the reverse transport of cholesterol from tissues to the liver for excretion by promoting cholesterol efflux from tissues and by acting as a cofactor for the lecithin cholesterol acyltransferase (LCAT). The polypeptide is Apolipoprotein A-I-2 (Oncorhynchus mykiss (Rainbow trout)).